The chain runs to 1523 residues: ATP-binding cassette sub-family C member 3 (1523 aa).

Over Met-1 to Ser-35 the chain is Extracellular. N-linked (GlcNAc...) asparagine glycosylation is present at Asn-18. Residues Leu-36–Leu-56 form a helical membrane-spanning segment. At Arg-57–Ala-75 the chain is on the cytoplasmic side. Residues Leu-76–Ile-96 form a helical membrane-spanning segment. The Extracellular segment spans residues His-97–Ala-102. A helical membrane pass occupies residues Pro-103–Ile-123. Residues Gln-124 to Arg-129 lie on the Cytoplasmic side of the membrane. A helical membrane pass occupies residues Gly-130 to Ile-150. The Extracellular portion of the chain corresponds to Pro-151 to Arg-170. Residues Phe-171–Lys-191 traverse the membrane as a helical segment. Residues Glu-192–Ala-301 are Cytoplasmic-facing. The helical transmembrane segment at Leu-302 to Gly-324 threads the bilayer. The ABC transmembrane type-1 1 domain maps to Leu-310–Gln-593. The Extracellular segment spans residues Phe-325–Thr-345. The helical transmembrane segment at Trp-346–Leu-366 threads the bilayer. Residues His-367 to Phe-419 are Cytoplasmic-facing. Residues Met-420–Ile-440 form a helical membrane-spanning segment. Residue Tyr-441 is a topological domain, extracellular. The chain crosses the membrane as a helical span at residues Phe-442–Ile-462. The Cytoplasmic segment spans residues Pro-463–Thr-535. The chain crosses the membrane as a helical span at residues Phe-536–Val-556. At Asp-557–Ala-567 the chain is on the extracellular side. Residues Phe-568–Ile-588 form a helical membrane-spanning segment. Residues Ser-589–Thr-967 lie on the Cytoplasmic side of the membrane. An ABC transporter 1 domain is found at Ile-626 to Asn-850. Position 660–667 (Gly-660–Ser-667) interacts with ATP. 2 positions are modified to phosphoserine: Ser-903 and Ser-906. Residues Ser-903–Thr-915 show a composition bias toward polar residues. Residues Ser-903 to Ser-923 are disordered. The region spanning Thr-967 to Ser-1248 is the ABC transmembrane type-1 2 domain. Residues Leu-968–Leu-988 traverse the membrane as a helical segment. Residues Ser-989 to Ala-1013 lie on the Extracellular side of the membrane. The N-linked (GlcNAc...) asparagine glycan is linked to Asn-1002. The helical transmembrane segment at Leu-1014 to Ile-1034 threads the bilayer. Residues Gln-1035–Asp-1071 lie on the Cytoplasmic side of the membrane. The chain crosses the membrane as a helical span at residues Ile-1072–Thr-1092. Topologically, residues Ser-1093–Thr-1096 are extracellular. Residues Ile-1097–Leu-1117 form a helical membrane-spanning segment. At Tyr-1118–Leu-1191 the chain is on the cytoplasmic side. A helical membrane pass occupies residues Gly-1192–Ile-1212. Residues Gly-1213 to Pro-1219 lie on the Extracellular side of the membrane. Residues Gly-1220 to Ile-1240 form a helical membrane-spanning segment. Residues Arg-1241–Ala-1523 lie on the Cytoplasmic side of the membrane. Positions Phe-1287–Asp-1519 constitute an ABC transporter 2 domain. Gly-1319–Ser-1326 contributes to the ATP binding site.

The protein belongs to the ABC transporter superfamily. ABCC family. Conjugate transporter (TC 3.A.1.208) subfamily. Detected throughout the gastrointestinal tract, liver, lung, pancreas, bladder, gall bladder and at low levels in the adrenal gland.

It is found in the basolateral cell membrane. It localises to the basal cell membrane. It carries out the reaction an S-substituted glutathione(in) + ATP + H2O = an S-substituted glutathione(out) + ADP + phosphate + H(+). It catalyses the reaction ATP + H2O + xenobioticSide 1 = ADP + phosphate + xenobioticSide 2.. The catalysed reaction is 17beta-estradiol 17-O-(beta-D-glucuronate)(in) + ATP + H2O = 17beta-estradiol 17-O-(beta-D-glucuronate)(out) + ADP + phosphate + H(+). The enzyme catalyses dehydroepiandrosterone 3-sulfate(in) + ATP + H2O = dehydroepiandrosterone 3-sulfate(out) + ADP + phosphate + H(+). It carries out the reaction leukotriene C4(in) + ATP + H2O = leukotriene C4(out) + ADP + phosphate + H(+). It catalyses the reaction taurocholate(in) + ATP + H2O = taurocholate(out) + ADP + phosphate + H(+). The catalysed reaction is glycocholate(in) + ATP + H2O = glycocholate(out) + ADP + phosphate + H(+). The enzyme catalyses taurolithocholate 3-sulfate(in) + ATP + H2O = taurolithocholate 3-sulfate(out) + ADP + phosphate + H(+). It carries out the reaction taurochenodeoxycholate 3-sulfate(in) + ATP + H2O = taurochenodeoxycholate 3-sulfate(out) + ADP + phosphate + H(+). It catalyses the reaction (4Z,15Z)-bilirubin IXalpha C8-beta-D-glucuronoside(in) + ATP + H2O = (4Z,15Z)-bilirubin IXalpha C8-beta-D-glucuronoside(out) + ADP + phosphate + H(+). The catalysed reaction is (4Z,15Z)-bilirubin IXalpha C8,C12-beta-D-bisglucuronoside(in) + ATP + H2O = (4Z,15Z)-bilirubin IXalpha C8,C12-beta-D-bisglucuronoside(out) + ADP + phosphate + H(+). In terms of biological role, ATP-dependent transporter of the ATP-binding cassette (ABC) family that binds and hydrolyzes ATP to enable active transport of various substrates including many drugs, toxicants and endogenous compound across cell membranes. Transports glucuronide conjugates such as bilirubin diglucuronide, estradiol-17-beta-o-glucuronide and GSH conjugates such as leukotriene C4 (LTC4). Transports also various bile salts (taurocholate, glycocholate, taurochenodeoxycholate-3-sulfate, taurolithocholate- 3-sulfate). Does not contribute substantially to bile salt physiology but provides an alternative route for the export of bile acids and glucuronides from cholestatic hepatocytes. May contribute to regulate the transport of organic compounds in testes across the blood-testis-barrier. This is ATP-binding cassette sub-family C member 3 (Abcc3) from Mus musculus (Mouse).